Consider the following 467-residue polypeptide: Glutamate--tRNA ligase (467 aa).

Positions 9–19 (PSPTGYLHIGG) match the 'HIGH' region motif. A 'KMSKS' region motif is present at residues 237–241 (KLSKR). K240 contributes to the ATP binding site.

This sequence belongs to the class-I aminoacyl-tRNA synthetase family. Glutamate--tRNA ligase type 1 subfamily. Monomer.

It localises to the cytoplasm. It catalyses the reaction tRNA(Glu) + L-glutamate + ATP = L-glutamyl-tRNA(Glu) + AMP + diphosphate. In terms of biological role, catalyzes the attachment of glutamate to tRNA(Glu) in a two-step reaction: glutamate is first activated by ATP to form Glu-AMP and then transferred to the acceptor end of tRNA(Glu). This chain is Glutamate--tRNA ligase, found in Xylella fastidiosa (strain M12).